We begin with the raw amino-acid sequence, 148 residues long: Large ribosomal subunit protein bL9 (148 aa).

This sequence belongs to the bacterial ribosomal protein bL9 family.

Its function is as follows. Binds to the 23S rRNA. The sequence is that of Large ribosomal subunit protein bL9 from Listeria welshimeri serovar 6b (strain ATCC 35897 / DSM 20650 / CCUG 15529 / CIP 8149 / NCTC 11857 / SLCC 5334 / V8).